Consider the following 190-residue polypeptide: dCTP deaminase, dUMP-forming (190 aa).

DCTP is bound by residues Lys-101–Arg-106, Asp-119, Thr-127–Glu-129, Gln-148, Tyr-162, Lys-170, and Gln-174. Glu-129 functions as the Proton donor/acceptor in the catalytic mechanism. Positions His-160–Thr-190 are disordered. Residues Tyr-171–Thr-190 show a composition bias toward polar residues.

The protein belongs to the dCTP deaminase family. In terms of assembly, homotrimer.

The catalysed reaction is dCTP + 2 H2O = dUMP + NH4(+) + diphosphate. The protein operates within pyrimidine metabolism; dUMP biosynthesis; dUMP from dCTP: step 1/1. Its function is as follows. Bifunctional enzyme that catalyzes both the deamination of dCTP to dUTP and the hydrolysis of dUTP to dUMP without releasing the toxic dUTP intermediate. This Mycobacterium bovis (strain ATCC BAA-935 / AF2122/97) protein is dCTP deaminase, dUMP-forming.